The following is a 385-amino-acid chain: Succinate--CoA ligase [ADP-forming] subunit beta (385 aa).

The ATP-grasp domain maps to 9–237; it reads KEILRQFGVN…LEAEHPLEIE (229 aa). ATP is bound by residues Lys-45, 52-54, Val-94, and Glu-101; that span reads GRG. Positions 192 and 206 each coordinate Mg(2+). Substrate contacts are provided by residues Asn-257 and 314 to 316; that span reads GIT.

Belongs to the succinate/malate CoA ligase beta subunit family. Heterotetramer of two alpha and two beta subunits. Requires Mg(2+) as cofactor.

The enzyme catalyses succinate + ATP + CoA = succinyl-CoA + ADP + phosphate. The catalysed reaction is GTP + succinate + CoA = succinyl-CoA + GDP + phosphate. It functions in the pathway carbohydrate metabolism; tricarboxylic acid cycle; succinate from succinyl-CoA (ligase route): step 1/1. Functionally, succinyl-CoA synthetase functions in the citric acid cycle (TCA), coupling the hydrolysis of succinyl-CoA to the synthesis of either ATP or GTP and thus represents the only step of substrate-level phosphorylation in the TCA. The beta subunit provides nucleotide specificity of the enzyme and binds the substrate succinate, while the binding sites for coenzyme A and phosphate are found in the alpha subunit. The polypeptide is Succinate--CoA ligase [ADP-forming] subunit beta (Deinococcus deserti (strain DSM 17065 / CIP 109153 / LMG 22923 / VCD115)).